An 862-amino-acid polypeptide reads, in one-letter code: MEENIFSSNQDIDAIDVEDSIKASYLDYSMSVIIGRALPDARDGLKPVHRRILYAMNDLGVGSRSPYKKSARIVGDVIGKYHPHGDTAVYDALVRMAQNFSMRVPAVDGQGNFGSVDGDGAAAMRYTEARMTVLAEELLRDLDKDTVDFIPNYDDSLSEPDVLPARVPNLLLNGSSGIAVGMATNIPPHSLDELVNGLLTLLDDKEVGLEDIMTHIKGPDFPTGGIIFGKKGIIEAYKTGRGRIKLRAKTHIEKKPNKDVIVVDELPYQVNKAKLHADIADLVKEKLIDGISEVRDESDRDGIRLVIELKRDAMSEIVLNNLFKSTQMEVTFGVIMLAINNKEPKVFSLLELLKLFLNHRKTVIIRRTIFELQKARARAHILEGLKIALDNIDAVINLIKTSADTNSARDGLMAKFGLSELQSNAILDMRLSKLTGLEREKLEAELKEILELIEKLDAILKSETLIENIIRDELLEIKSKFKCPRITDIVDDYDDIDVEDLIPNENMVVTITHRGYIKRVPSKSYEKQKRGGKGKVAVTTYDDDFIESFFTCMSHDTLMFVTDRGQLYWLKVYKIPEGSRTAKGKAVVNLISLQADEKIKAIIPTTDFDESKSLAFFTKNGIVKRTNLSEFKNIRSIGVKAINLDDNDELVTVVIANSEPDESYDDSFEDGEGVSNLQTISEDNSENSLESGKMLFAVTKKGMCIKFALNKVRQIGRVSRGVTAIRFKENLDEVVGAVVIENDSQEILSVSQKGIGKRTTADEYRLQSRGGKGVICMKLTPKTKDLVGVVMVDEEMDLMALTSSGKMIRVDMQSIRKAGRNTSGVIVVNVDGDEVVSIARCPKEESDDDDIVADDTQEQDME.

The Topo IIA-type catalytic domain maps to 38–501 (LPDARDGLKP…DYDDIDVEDL (464 aa)). Tyrosine 126 acts as the O-(5'-phospho-DNA)-tyrosine intermediate in catalysis. Residues 528 to 534 (QKRGGKG) carry the GyrA-box motif. The disordered stretch occupies residues 843–862 (KEESDDDDIVADDTQEQDME). Residues 845-862 (ESDDDDIVADDTQEQDME) are compositionally biased toward acidic residues.

It belongs to the type II topoisomerase GyrA/ParC subunit family. In terms of assembly, heterotetramer, composed of two GyrA and two GyrB chains. In the heterotetramer, GyrA contains the active site tyrosine that forms a transient covalent intermediate with DNA, while GyrB binds cofactors and catalyzes ATP hydrolysis.

The protein resides in the cytoplasm. It carries out the reaction ATP-dependent breakage, passage and rejoining of double-stranded DNA.. Its function is as follows. A type II topoisomerase that negatively supercoils closed circular double-stranded (ds) DNA in an ATP-dependent manner to modulate DNA topology and maintain chromosomes in an underwound state. Negative supercoiling favors strand separation, and DNA replication, transcription, recombination and repair, all of which involve strand separation. Also able to catalyze the interconversion of other topological isomers of dsDNA rings, including catenanes and knotted rings. Type II topoisomerases break and join 2 DNA strands simultaneously in an ATP-dependent manner. This Campylobacter fetus protein is DNA gyrase subunit A.